Reading from the N-terminus, the 535-residue chain is Bifunctional purine biosynthesis protein PurH (535 aa).

Residues Met1 to Val148 enclose the MGS-like domain.

It belongs to the PurH family.

It carries out the reaction (6R)-10-formyltetrahydrofolate + 5-amino-1-(5-phospho-beta-D-ribosyl)imidazole-4-carboxamide = 5-formamido-1-(5-phospho-D-ribosyl)imidazole-4-carboxamide + (6S)-5,6,7,8-tetrahydrofolate. It catalyses the reaction IMP + H2O = 5-formamido-1-(5-phospho-D-ribosyl)imidazole-4-carboxamide. It participates in purine metabolism; IMP biosynthesis via de novo pathway; 5-formamido-1-(5-phospho-D-ribosyl)imidazole-4-carboxamide from 5-amino-1-(5-phospho-D-ribosyl)imidazole-4-carboxamide (10-formyl THF route): step 1/1. The protein operates within purine metabolism; IMP biosynthesis via de novo pathway; IMP from 5-formamido-1-(5-phospho-D-ribosyl)imidazole-4-carboxamide: step 1/1. This Shewanella woodyi (strain ATCC 51908 / MS32) protein is Bifunctional purine biosynthesis protein PurH.